A 1406-amino-acid chain; its full sequence is Receptor-type tyrosine-protein phosphatase eta (1406 aa).

Residues 1 to 24 form the signal peptide; it reads MRRLPLLPPCPLLLLLLLPAEVRC. Residues 25-1044 are Extracellular-facing; that stretch reads TTACTDDCSL…LPQDPGVIAG (1020 aa). 36 N-linked (GlcNAc...) asparagine glycosylation sites follow: asparagine 36, asparagine 52, asparagine 97, asparagine 103, asparagine 118, asparagine 124, asparagine 186, asparagine 192, asparagine 243, asparagine 275, asparagine 281, asparagine 296, asparagine 302, asparagine 331, asparagine 332, asparagine 364, asparagine 385, asparagine 391, asparagine 453, asparagine 459, asparagine 484, asparagine 500, asparagine 510, asparagine 547, asparagine 568, asparagine 630, asparagine 636, asparagine 651, asparagine 657, asparagine 719, asparagine 745, asparagine 750, asparagine 766, asparagine 776, asparagine 804, and asparagine 828. The segment at 39-72 is disordered; it reads EEMGTSSNDELSVNATSGNRRLSEDVSLPGRAMS. The span at 41 to 58 shows a compositional bias: polar residues; sequence MGTSSNDELSVNATSGNR. 10 Fibronectin type-III domains span residues 82 to 170, 171 to 259, 260 to 343, 346 to 437, 438 to 523, 524 to 614, 615 to 703, 704 to 793, 794 to 888, and 887 to 979; these read AVLD…TKPS, PVLD…TKPS, PVLD…SLNL, KPSP…TKPS, PVLD…SLYT, KPTP…TKPR, AVLH…TKPS, MVLN…VPSS, VNAF…TDPP, and PPVP…IVDV. Asparagine 1010 is a glycosylation site (N-linked (GlcNAc...) asparagine). The chain crosses the membrane as a helical span at residues 1045–1065; it reads AVIGCLLAILAVVAIGGYIFW. Over 1066-1406 the chain is Cytoplasmic; it reads RRRRKDKRNT…AFGKANGYHA (341 aa). The 258-residue stretch at 1110 to 1367 folds into the Tyrosine-protein phosphatase domain; it reads FAEEYEELKS…VFLNQCVMDI (258 aa). Residues aspartate 1274, 1308–1314, and glutamine 1352 each bind substrate; that span reads CSAGVGR. Catalysis depends on cysteine 1308, which acts as the Phosphocysteine intermediate.

It belongs to the protein-tyrosine phosphatase family. Receptor class 3 subfamily. In terms of tissue distribution, found on the apical surfaces of retinal Mueller cells, renal tubule cells and intestinal brush border cells.

It localises to the cell membrane. The protein resides in the cell projection. It is found in the ruffle membrane. The protein localises to the cell junction. The catalysed reaction is O-phospho-L-tyrosyl-[protein] + H2O = L-tyrosyl-[protein] + phosphate. Functionally, tyrosine phosphatase which dephosphorylates or contributes to the dephosphorylation of several substrates. Plays a role in cell adhesion, migration, proliferation and differentiation. Has a role in megakaryocytes and platelet formation. May influence the potential of nonsensory supporting cells to either proliferate or differentiate into hair cells. The polypeptide is Receptor-type tyrosine-protein phosphatase eta (PTPRJ) (Gallus gallus (Chicken)).